Reading from the N-terminus, the 408-residue chain is Imidazolonepropionase (408 aa).

Fe(3+) contacts are provided by H72 and H74. Zn(2+)-binding residues include H72 and H74. Residues R81, Y144, and H177 each contribute to the 4-imidazolone-5-propanoate site. Y144 lines the N-formimidoyl-L-glutamate pocket. H242 lines the Fe(3+) pocket. H242 contributes to the Zn(2+) binding site. Position 245 (Q245) interacts with 4-imidazolone-5-propanoate. Residue D317 participates in Fe(3+) binding. Residue D317 participates in Zn(2+) binding. Residues N319 and G321 each coordinate N-formimidoyl-L-glutamate. T322 contacts 4-imidazolone-5-propanoate.

This sequence belongs to the metallo-dependent hydrolases superfamily. HutI family. Zn(2+) serves as cofactor. It depends on Fe(3+) as a cofactor.

It is found in the cytoplasm. The catalysed reaction is 4-imidazolone-5-propanoate + H2O = N-formimidoyl-L-glutamate. Its pathway is amino-acid degradation; L-histidine degradation into L-glutamate; N-formimidoyl-L-glutamate from L-histidine: step 3/3. Catalyzes the hydrolytic cleavage of the carbon-nitrogen bond in imidazolone-5-propanoate to yield N-formimidoyl-L-glutamate. It is the third step in the universal histidine degradation pathway. The chain is Imidazolonepropionase from Aliivibrio fischeri (strain MJ11) (Vibrio fischeri).